Here is a 286-residue protein sequence, read N- to C-terminus: Deaminated glutathione amidase (286 aa).

One can recognise a CN hydrolase domain in the interval 4 to 252 (ANVALLQLCS…VSALKVKIET (249 aa)). Glu-42 acts as the Proton acceptor in catalysis. Lys-115 is an active-site residue. Cys-157 acts as the Nucleophile in catalysis.

This sequence belongs to the carbon-nitrogen hydrolase superfamily. NIT1/NIT2 family.

The catalysed reaction is N-(4-oxoglutaryl)-L-cysteinylglycine + H2O = L-cysteinylglycine + 2-oxoglutarate. Functionally, hydrolyzes deaminated glutathione (dGSH, 2-oxoglutaramate) to alpha-ketoglutarate (alpha-KG) and cysteinylglycine (specific activity 6.50 umol/min/mg), has less activity against alpha-ketoglutaramate (a-KGM, specific activity 0.20 umol/min/mg), very little activity on glutathione and none on L-glutamine. May function as a metabolite repair enzyme. The sequence is that of Deaminated glutathione amidase from Yersinia enterocolitica.